The following is a 152-amino-acid chain: UPF0178 protein SAR0734 (152 aa).

The protein belongs to the UPF0178 family.

This Staphylococcus aureus (strain MRSA252) protein is UPF0178 protein SAR0734.